Consider the following 154-residue polypeptide: uncharacterized protein (154 aa).

5 helical membrane passes run 5–24 (TLIIAVAGLFAVASSIGVLL), 29–48 (FYAALYMSVTMLFVAAIYAA), 53–75 (PVVVIIALIFVGAVGIVTVAIAA), 87–109 (IFWVVPVIVVFAILALAYASMAV), and 124–146 (ATDYFFVVAFLFTLVVLMMLSAI).

The protein resides in the cell membrane. This is an uncharacterized protein from Archaeoglobus fulgidus (strain ATCC 49558 / DSM 4304 / JCM 9628 / NBRC 100126 / VC-16).